The following is a 389-amino-acid chain: Capsule polysaccharide export protein KpsS (389 aa).

The protein is Capsule polysaccharide export protein KpsS (kpsS) of Escherichia coli.